The sequence spans 1093 residues: Synaptopodin-2 (1093 aa).

Residues 1–180 (MGTGDFICIS…PDSQRGRVAE (180 aa)) are interaction with VPS18. The PDZ domain occupies 6 to 88 (FICISMTGGA…SLQMLIKRPS (83 aa)). Disordered regions lie at residues 144-174 (ENQR…PDSQ) and 211-233 (ASGP…DPNL). Residues 222-233 (EKSKSPDPDPNL) show a composition bias toward basic and acidic residues. Residues serine 274, serine 310, serine 329, and serine 330 each carry the phosphoserine modification. Positions 329 to 369 (SSEGTEQGEDPRSEKDHSRPHKHRARHARLRRSESLSEKQV) are disordered. Threonine 333 bears the Phosphothreonine mark. Basic residues predominate over residues 346-358 (SRPHKHRARHARL). The segment covering 359-369 (RRSESLSEKQV) has biased composition (basic and acidic residues). The Nuclear localization signal signature appears at 398-406 (KKRRRRARK). Interaction with ACTN2 stretches follow at residues 481-663 (MEML…FYDS), 664-924 (SERI…PPVA), and 901-1093 (QSPT…VVEE). 2 disordered regions span residues 507-803 (AQKE…GTVV) and 834-870 (AVAS…GMSG). F-actin binding stretches follow at residues 534 to 663 (TSYQ…FYDS) and 664 to 803 (SERI…GTVV). Phosphoserine is present on residues serine 548, serine 549, and serine 551. 2 stretches are compositionally biased toward polar residues: residues 565-579 (PQQN…TANI) and 595-611 (SVNQ…NMTS). Residue serine 604 is modified to Phosphoserine. An interaction with YWHAB region spans residues 607 to 811 (RNMTSPIADF…VVSSIKIAQP (205 aa)). Threonine 610 carries the post-translational modification Phosphothreonine. Residue serine 611 is modified to Phosphoserine. An interaction with BAG3 region spans residues 615–626 (DFPAPPPYSAVT). Composition is skewed to pro residues over residues 617 to 630 (PAPP…PPPD) and 644 to 655 (AQPPPWPQPAPW). The PPPY motif motif lies at 619–622 (PPPY). A Phosphotyrosine modification is found at tyrosine 622. The residue at position 626 (threonine 626) is a Phosphothreonine. Positions 663–674 (SSERIASRDERI) are enriched in basic and acidic residues. Residues 664–916 (SERIASRDER…LPASWKYSSN (253 aa)) are F-actin bundling activity. Serine 705 and serine 729 each carry phosphoserine. Residues 751–900 (AKQKTPPPVA…DTVQAHAARA (150 aa)) are actin binding. 2 positions are modified to phosphothreonine: threonine 755 and threonine 774. The segment covering 762-784 (KPAVKSSSSQPVTPVSPVWSPGV) has biased composition (low complexity). Residues serine 777 and serine 781 each carry the phosphoserine modification. Polar residues-rich tracts occupy residues 793-803 (PTSNPSKGTVV) and 835-853 (VASQ…TVNA). Positions 810 to 1093 (QPSYPPARPA…QVWKPSVVEE (284 aa)) are interaction with FLNC. Phosphoserine occurs at positions 902, 906, and 910. The tract at residues 937 to 956 (ALKSQPSAAQPSKMGKKKGK) is disordered. Positions 1000 to 1019 (LAMKQALPPRPVNAASPTNV) are interaction with ZYX. Position 1015 is a phosphoserine (serine 1015). Low complexity predominate over residues 1041-1050 (SSPVSASPVP). The disordered stretch occupies residues 1041-1064 (SSPVSASPVPVGIPTSPKQESASS). Position 1056 is a phosphoserine (serine 1056).

The protein belongs to the synaptopodin family. In terms of assembly, may self-associate in muscle cells under oxidative stress. Binds F-actin. Interacts with ACTN2; ACTN2 is proposed to anchor SYOP2 at Z lines in mature myocytes. Interacts with AKAP6, PPP3CA and CAMK2A. Interacts (phosphorylated form) with YWHAB; YWHAB competes with ACTN2 for interaction with SYNPO2. Interacts with KPNA2; mediating nuclear import of SYNOP2; dependent on interaction with YWHAB. Interacts with IPO13; may be implicated in SYNOP2 nuclear import. Interacts with ZYX, FLNC, ILK. Interacts with BAG3 (via WW 1 domain). May associate with the CASA complex consisting of HSPA8, HSPB8 and BAG3. Interacts with VPS18. Phosphorylated by PKA, and by CaMK2 at multiple sites. Dephosphorylated by calcineurin; abrogating interaction with YWHAB and impairing nuclear import. Phosphorylated by ILK. As to expression, expressed in heart muscle. Isoform 5 is specifically expressed in skeletal muscle.

It is found in the nucleus. The protein resides in the cytoplasm. Its subcellular location is the cytoskeleton. It localises to the myofibril. The protein localises to the sarcomere. It is found in the z line. The protein resides in the cell junction. Its subcellular location is the focal adhesion. Functionally, has an actin-binding and actin-bundling activity. Can induce the formation of F-actin networks in an isoform-specific manner. At the sarcomeric Z lines is proposed to act as adapter protein that links nascent myofibers to the sarcolemma via ZYX and may play a role in early assembly and stabilization of the Z lines. Involved in autophagosome formation. May play a role in chaperone-assisted selective autophagy (CASA) involved in Z lines maintenance in striated muscle under mechanical tension; may link the client-processing CASA chaperone machinery to a membrane-tethering and fusion complex providing autophagosome membranes. Involved in regulation of cell migration. May be a tumor suppressor. Involved in regulation of cell migration. Can induce formation of thick, irregular actin bundles in the cell body. In terms of biological role, involved in regulation of cell migration. Can induce long, well-organized actin bundles frequently orientated in parallel along the long axis of the cell showing characteristics of contractile ventral stress fibers. Its function is as follows. Involved in regulation of cell migration. Can induce an amorphous actin meshwork throughout the cell body containing a mixture of long and short, randomly organized thick and thin actin bundles. Functionally, can induce long, well-organized actin bundles frequently orientated in parallel along the long axis of the cell showing characteristics of contractile ventral stress fibers. Involved in regulation of cell migration in part dependent on the Rho-ROCK cascade; can promote formation of nascent focal adhesions, actin bundles at the leading cell edge and lamellipodia. Can induce formation of thick, irregular actin bundles in the cell body; the induced actin network is associated with enhanced cell migration in vitro. In Homo sapiens (Human), this protein is Synaptopodin-2 (SYNPO2).